Here is a 514-residue protein sequence, read N- to C-terminus: CBL-interacting protein kinase 25 (514 aa).

The Protein kinase domain maps to 21-281 (YEFGPLVGEG…IPEIMEMRWF (261 aa)). ATP contacts are provided by residues 27–35 (VGEGNFAKV) and K50. The Proton acceptor role is filled by D149. Residues 167-196 (DFGLSALADMERREAHLQTVCGTPLFLAPE) are activation loop. The interval 303–340 (GLDGEPELYDSDTDTIESSSSSESPTPVAGTPRGMHTS) is disordered. Positions 304–317 (LDGEPELYDSDTDT) are enriched in acidic residues. Over residues 318–329 (IESSSSSESPTP) the composition is skewed to low complexity. One can recognise an NAF domain in the interval 323–395 (SSESPTPVAG…PSFDLSGLFE (73 aa)). The tract at residues 398–427 (GERMRFVSGAPVADIIAKLQEIAGMVSFTA) is PPI.

The protein belongs to the protein kinase superfamily. CAMK Ser/Thr protein kinase family. SNF1 subfamily. It depends on Mn(2+) as a cofactor.

The enzyme catalyses L-seryl-[protein] + ATP = O-phospho-L-seryl-[protein] + ADP + H(+). The catalysed reaction is L-threonyl-[protein] + ATP = O-phospho-L-threonyl-[protein] + ADP + H(+). CIPK serine-threonine protein kinases interact with CBL proteins. Binding of a CBL protein to the regulatory NAF domain of CIPK protein lead to the activation of the kinase in a calcium-dependent manner. This Oryza sativa subsp. japonica (Rice) protein is CBL-interacting protein kinase 25 (CIPK25).